The chain runs to 221 residues: Ribosomal RNA large subunit methyltransferase E (221 aa).

Gly60, Trp62, Asp89, Asp105, and Asp134 together coordinate S-adenosyl-L-methionine. Lys174 functions as the Proton acceptor in the catalytic mechanism.

Belongs to the class I-like SAM-binding methyltransferase superfamily. RNA methyltransferase RlmE family.

The protein localises to the cytoplasm. It carries out the reaction uridine(2552) in 23S rRNA + S-adenosyl-L-methionine = 2'-O-methyluridine(2552) in 23S rRNA + S-adenosyl-L-homocysteine + H(+). Specifically methylates the uridine in position 2552 of 23S rRNA at the 2'-O position of the ribose in the fully assembled 50S ribosomal subunit. The polypeptide is Ribosomal RNA large subunit methyltransferase E (Cupriavidus metallidurans (strain ATCC 43123 / DSM 2839 / NBRC 102507 / CH34) (Ralstonia metallidurans)).